Consider the following 188-residue polypeptide: U1 small nuclear ribonucleoprotein C-2 (188 aa).

A Matrin-type zinc finger spans residues 4 to 36 (YYCDYCDVFLVSESPSVRKAHNSGRNHLTNVRD). A disordered region spans residues 57–188 (FETGGGNSTS…MNPDRARQLG (132 aa)). Positions 72–82 (GNPPGSQPGPP) are enriched in pro residues. Low complexity predominate over residues 109-124 (AMLALMNGQNGMSSPG). A compositionally biased stretch (pro residues) spans 125–141 (SGPPPMRFAGPPIPNNM).

Belongs to the U1 small nuclear ribonucleoprotein C family. In terms of assembly, U1 snRNP is composed of the 7 core Sm proteins B/B', D1, D2, D3, E, F and G that assemble in a heptameric protein ring on the Sm site of the small nuclear RNA to form the core snRNP, and at least 3 U1 snRNP-specific proteins U1-70K, U1-A and U1-C. U1-C interacts with U1 snRNA and the 5' splice-site region of the pre-mRNA.

It is found in the nucleus. Its function is as follows. Component of the spliceosomal U1 snRNP, which is essential for recognition of the pre-mRNA 5' splice-site and the subsequent assembly of the spliceosome. U1-C is directly involved in initial 5' splice-site recognition for both constitutive and regulated alternative splicing. The interaction with the 5' splice-site seems to precede base-pairing between the pre-mRNA and the U1 snRNA. Stimulates commitment or early (E) complex formation by stabilizing the base pairing of the 5' end of the U1 snRNA and the 5' splice-site region. In Puccinia graminis f. sp. tritici (strain CRL 75-36-700-3 / race SCCL) (Black stem rust fungus), this protein is U1 small nuclear ribonucleoprotein C-2.